A 956-amino-acid chain; its full sequence is Probable hypoxanthine oxidase XdhD (956 aa).

Mo-molybdopterin contacts are provided by Gln-414, Phe-445, and Ala-727.

The protein belongs to the xanthine dehydrogenase family. The cofactor is [2Fe-2S] cluster. It depends on Mo-molybdopterin as a cofactor.

Probably has no xanthine dehydrogenase activity; however deletion results in increased adenine sensitivity, suggesting that this protein contributes to the conversion of adenine to guanine nucleotides during purine salvage. The chain is Probable hypoxanthine oxidase XdhD (xdhD) from Escherichia coli (strain K12).